A 341-amino-acid polypeptide reads, in one-letter code: Dihydroorotate dehydrogenase (quinone) (341 aa).

FMN contacts are provided by residues alanine 61–lysine 65 and threonine 85. Residue lysine 65 coordinates substrate. Asparagine 110–phenylalanine 114 serves as a coordination point for substrate. Residues asparagine 138 and asparagine 171 each coordinate FMN. Asparagine 171 contributes to the substrate binding site. Serine 174 functions as the Nucleophile in the catalytic mechanism. Residue asparagine 176 participates in substrate binding. Residues lysine 216 and threonine 244 each contribute to the FMN site. Asparagine 245–threonine 246 contributes to the substrate binding site. FMN-binding positions include glycine 267, glycine 296, and tyrosine 317–serine 318.

It belongs to the dihydroorotate dehydrogenase family. Type 2 subfamily. In terms of assembly, monomer. The cofactor is FMN.

Its subcellular location is the cell membrane. It catalyses the reaction (S)-dihydroorotate + a quinone = orotate + a quinol. Its pathway is pyrimidine metabolism; UMP biosynthesis via de novo pathway; orotate from (S)-dihydroorotate (quinone route): step 1/1. In terms of biological role, catalyzes the conversion of dihydroorotate to orotate with quinone as electron acceptor. The sequence is that of Dihydroorotate dehydrogenase (quinone) from Pseudomonas fluorescens (strain SBW25).